The chain runs to 149 residues: MEFSRDAGMMMENKRNVCSLGESSIKRHKSDLSFSSKERKDKVGERISALQQIVSPYGKTDTASVLLDAMHYIEFLHEQVKVLSAPYLQTVPDATQEELEQYSLRNRGLCLVPMENTVGVAQSNGADIWAPVKTPLSPAFSVTSQSPFR.

Residues 27–76 (RHKSDLSFSSKERKDKVGERISALQQIVSPYGKTDTASVLLDAMHYIEFL) form the bHLH domain.

Belongs to the bHLH protein family.

Its subcellular location is the nucleus. The sequence is that of Transcription factor bHLH153 from Arabidopsis thaliana (Mouse-ear cress).